Consider the following 644-residue polypeptide: Kininogen-1 (644 aa).

Positions 1 to 18 (MKLITILFLCSRLLLSLT) are cleaved as a signal peptide. At Q19 the chain carries Pyrrolidone carboxylic acid; in mature form. A Cystatin kininogen-type 1 domain is found at 28–132 (CNDKDLFKAV…TQTCQITPAE (105 aa)). 9 cysteine pairs are disulfide-bonded: C28-C614, C83-C94, C107-C126, C142-C145, C206-C218, C229-C248, C264-C267, C328-C340, and C351-C370. The N-linked (GlcNAc...) (complex) asparagine glycan is linked to N48. The O-glycosylated at one site only stretch occupies residues 120–153 (SVATQTCQITPAEGPVVTAQYDCLGCVHPISTQS). One can recognise a Cystatin kininogen-type 2 domain in the interval 151–254 (TQSPDLEPIL…SQNCDIYPGK (104 aa)). N-linked (GlcNAc...) asparagine glycosylation occurs at N169. N-linked (GlcNAc...) (complex) asparagine glycosylation is present at N205. The Cystatin kininogen-type 3 domain maps to 273–376 (TNSPELEETL…TVNCQPLGMI (104 aa)). N-linked (GlcNAc...) (complex) asparagine glycosylation is present at N294. The residue at position 332 (S332) is a Phosphoserine; by FAM20C. P383 is subject to 4-hydroxyproline; partial. Residues 387-555 (PFRSSRIGEI…TPIPSLAKPG (169 aa)) form a disordered region. T401 carries O-linked (GalNAc...) threonine glycosylation. A compositionally biased stretch (basic and acidic residues) spans 418–434 (DSGKEQGHTRRHDWGHE). 3 consecutive repeats follow at residues 420 to 449 (GKEQ…KHER), 450 to 479 (DQGH…KFKL), and 480 to 510 (DDDL…KNKG). Positions 435 to 446 (KQRKHNLGHGHK) are enriched in basic residues. Basic and acidic residues predominate over residues 477 to 493 (FKLDDDLEHQGGHVLDH). A compositionally biased stretch (basic residues) spans 494-518 (GHKHKHGHGHGKHKNKGKKNGKHNG). The segment covering 524–539 (LASSSEDSTTPSAQTQ) has biased composition (polar residues). 5 O-linked (GalNAc...) threonine glycosylation sites follow: T533, T542, T546, T557, and T571. S577 is a glycosylation site (O-linked (GalNAc...) serine). An O-linked (GalNAc...) threonine glycan is attached at T628.

As to quaternary structure, interacts (high molecular weight kininogen) (via amino acids 402-532) with triafestin-1 and triafestin-2, anticoagulant proteins from Triatoma infestans. Interacts (high molecular weight kininogen) (via amino acids 402-532) with short form salivary protein D7R1, an anticoagulant protein from Anopheles stephensi. Interacts (high molecular weight kininogen) (via amino acids 421-466 and 459-513) with haemaphysalin, an anticoagulant protein from Haemaphysalis longicornis. Post-translationally, bradykinin is inactivated by ACE, which removes the dipeptide Arg-Phe from its C-terminus. In terms of processing, bradykinin is released from kininogen by plasma kallikrein. Hydroxylation of Pro-383 occurs prior to the release of bradykinin. Post-translationally, phosphorylated by FAM20C in the extracellular medium. In terms of processing, N- and O-glycosylated. O-glycosylated with core 1 or possibly core 8 glycans. (Microbial infection) Bradykinin is generated upon proteolytic cleavage by S.pyogenes SpeB to produce hypotension during septic shock. As to expression, secreted in plasma. T-kinin is detected in malignant ovarian, colon and breast carcinomas, but not in benign tumors.

The protein resides in the secreted. Its subcellular location is the extracellular space. In terms of biological role, kininogens are inhibitors of thiol proteases. HMW-kininogen plays an important role in blood coagulation by helping to position optimally prekallikrein and factor XI next to factor XII; HMW-kininogen inhibits the thrombin- and plasmin-induced aggregation of thrombocytes. LMW-kininogen inhibits the aggregation of thrombocytes. LMW-kininogen is in contrast to HMW-kininogen not involved in blood clotting. The active peptide bradykinin is a potent vasodilatator that is released from HMW-kininogen shows a variety of physiological effects: (A) influence in smooth muscle contraction, (B) induction of hypotension, (C) natriuresis and diuresis, (D) decrease in blood glucose level, (E) it is a mediator of inflammation and causes (E1) increase in vascular permeability, (E2) stimulation of nociceptors (4E3) release of other mediators of inflammation (e.g. prostaglandins), (F) it has a cardioprotective effect (directly via bradykinin action, indirectly via endothelium-derived relaxing factor action). The protein is Kininogen-1 (KNG1) of Homo sapiens (Human).